The chain runs to 118 residues: Putative pterin-4-alpha-carbinolamine dehydratase (118 aa).

Belongs to the pterin-4-alpha-carbinolamine dehydratase family.

It catalyses the reaction (4aS,6R)-4a-hydroxy-L-erythro-5,6,7,8-tetrahydrobiopterin = (6R)-L-erythro-6,7-dihydrobiopterin + H2O. This is Putative pterin-4-alpha-carbinolamine dehydratase (phhB) from Xanthomonas axonopodis pv. citri (strain 306).